Reading from the N-terminus, the 152-residue chain is MDSGTEEYELNGGLPPGTPGSPDASPARWGWRHGPINVNHYASKKSAAESMLDIALLMANASQLKAVVEQGPSFAFYVPLVVLISISLVLQIGVGVLLIFLVKYDLNNPAKHAKLDFLNNLATGLVFIIVVVNIFITAFGVQKPLMDMAPQQ.

Residue Met1 is modified to N-acetylmethionine. The interval 1–26 (MDSGTEEYELNGGLPPGTPGSPDASP) is disordered. Topologically, residues 1–78 (MDSGTEEYEL…EQGPSFAFYV (78 aa)) are extracellular. Phosphoserine occurs at positions 21 and 25. The N-terminal adhesion motif stretch occupies residues 26–37 (PARWGWRHGPIN). Positions 40-69 (HYASKKSAAESMLDIALLMANASQLKAVVE) are required to induce plasma membrane rupture. The tract at residues 44-55 (KKSAAESMLDIA) is helix alpha1. Residues 58 to 74 (MANASQLKAVVEQGPSF) are helix alpha2. N-linked (GlcNAc...) asparagine glycosylation occurs at Asn60. The chain crosses the membrane as a helical span at residues 79–103 (PLVVLISISLVLQIGVGVLLIFLVK). Over 104–113 (YDLNNPAKHA) the chain is Cytoplasmic. A helical membrane pass occupies residues 114–138 (KLDFLNNLATGLVFIIVVVNIFITA). Topologically, residues 139 to 152 (FGVQKPLMDMAPQQ) are extracellular.

This sequence belongs to the ninjurin family. As to quaternary structure, homodimer; in absence of death stimuli, forms an inactive homodimer. Homooligomer; in response to death stimuli, homooligomerizes into long, highly branched filaments and large, ring-shaped structures in the membrane. In terms of processing, cleaved by MMP9 protease to generate the Secreted ninjurin-1 form. Post-translationally, N-linked glycosylation is required for homooligomerization. In terms of tissue distribution, widely expressed in both adult and embryonic tissues, primarily those of epithelial origin.

Its subcellular location is the cell membrane. The protein localises to the synaptic cell membrane. It localises to the secreted. With respect to regulation, in response to death stimuli, homooligomerizes and disrupts membrane integrity by introducing the hydrophilic faces of alpha1 and alpha2 helices into the hydrophobic membrane. Homooligomerization and ability to mediate plasma membrane rupture is inhibited by glycine; it is unclear whether glycine directly or indirectly inhibits homooligomerization. In normal conditions, NINJ1 is autoinhibited via formation of a homodimer: in the inactive homodimer, the alpha1 and alpha2 helices (residues 44-74) form a single transmembrane region without a kink, in which hydrophilic faces of alpha1 and alpha2 helices are sequestered. Effector of various programmed cell death, such as pyroptosis and necroptosis, which mediates plasma membrane rupture (cytolysis). Oligomerizes in response to death stimuli and forms ring-like structures on the plasma membrane: acts by cutting and shedding membrane disks, like a cookie cutter, leading to membrane damage and loss that cannot be repaired by the cell. Plasma membrane rupture leads to release intracellular molecules named damage-associated molecular patterns (DAMPs) that propagate the inflammatory response. Mechanistically, mediates plasma membrane rupture by introducing hydrophilic faces of 2 alpha helices into the hydrophobic membrane. Induces plasma membrane rupture downstream of Gasdermin (GSDMA, GSDMB, GSDMC, GSDMD, or GSDME) or MLKL during pyroptosis or necroptosis, respectively. Acts as an effector of PANoptosis downstream of CASP1, CASP4, CASP8 and RIPK3. Also induces plasma membrane rupture in response to cell swelling caused by osmotic stress and ferroptosis downstream of lipid peroxidation. Acts as a regulator of Toll-like receptor 4 (TLR4) signaling triggered by lipopolysaccharide (LPS) during systemic inflammation; directly binds LPS. Involved in leukocyte migration during inflammation by promoting transendothelial migration of macrophages via homotypic binding. Promotes the migration of monocytes across the brain endothelium to central nervous system inflammatory lesions. Also acts as a homophilic transmembrane adhesion molecule involved in various processes such as axonal growth, cell chemotaxis and angiogenesis. Promotes cell adhesion by mediating homophilic interactions via its extracellular N-terminal adhesion motif (N-NAM). Involved in the progression of the inflammatory stress by promoting cell-to-cell interactions between immune cells and endothelial cells. Plays a role in nerve regeneration by promoting maturation of Schwann cells. Acts as a regulator of angiogenesis. Promotes the formation of new vessels by mediating the interaction between capillary pericyte cells and endothelial cells. Promotes osteoclasts development by enhancing the survival of prefusion osteoclasts. Also involved in striated muscle growth and differentiation. In terms of biological role, secreted form generated by cleavage, which has chemotactic activity. Acts as an anti-inflammatory mediator by promoting monocyte recruitment, thereby ameliorating atherosclerosis. In Homo sapiens (Human), this protein is Ninjurin-1.